Consider the following 370-residue polypeptide: 3-dehydroquinate synthase (370 aa).

NAD(+) contacts are provided by residues 112–116 (GVIGD), 136–137 (TT), Lys-149, Lys-158, and 176–179 (TLKT). Positions 191, 256, and 273 each coordinate Zn(2+).

The protein belongs to the sugar phosphate cyclases superfamily. Dehydroquinate synthase family. Co(2+) is required as a cofactor. The cofactor is Zn(2+). Requires NAD(+) as cofactor.

The protein localises to the cytoplasm. It carries out the reaction 7-phospho-2-dehydro-3-deoxy-D-arabino-heptonate = 3-dehydroquinate + phosphate. It functions in the pathway metabolic intermediate biosynthesis; chorismate biosynthesis; chorismate from D-erythrose 4-phosphate and phosphoenolpyruvate: step 2/7. Functionally, catalyzes the conversion of 3-deoxy-D-arabino-heptulosonate 7-phosphate (DAHP) to dehydroquinate (DHQ). The sequence is that of 3-dehydroquinate synthase from Prochlorococcus marinus (strain MIT 9211).